Consider the following 152-residue polypeptide: Ribosome maturation factor RimP (152 aa).

Belongs to the RimP family.

The protein localises to the cytoplasm. Functionally, required for maturation of 30S ribosomal subunits. In Proteus mirabilis (strain HI4320), this protein is Ribosome maturation factor RimP.